We begin with the raw amino-acid sequence, 148 residues long: MRSTFLAKPHEIQRNWYIVDATDVPLGRLSSVVATVLRGKNKPTFTPSVDTGDFVIVINADKVQLTGKKATDKTYYHHSGYPGGLKARKAGTLREKNPKKLIELSVQGMLPKNTLGRAQGLKLHVYASGEEVGQSAQKPQVLNIKDLL.

This sequence belongs to the universal ribosomal protein uL13 family. Part of the 50S ribosomal subunit.

This protein is one of the early assembly proteins of the 50S ribosomal subunit, although it is not seen to bind rRNA by itself. It is important during the early stages of 50S assembly. The sequence is that of Large ribosomal subunit protein uL13 from Oenococcus oeni (strain ATCC BAA-331 / PSU-1).